We begin with the raw amino-acid sequence, 110 residues long: Large ribosomal subunit protein uL22 (110 aa).

The protein belongs to the universal ribosomal protein uL22 family. As to quaternary structure, part of the 50S ribosomal subunit.

Its function is as follows. This protein binds specifically to 23S rRNA; its binding is stimulated by other ribosomal proteins, e.g. L4, L17, and L20. It is important during the early stages of 50S assembly. It makes multiple contacts with different domains of the 23S rRNA in the assembled 50S subunit and ribosome. Functionally, the globular domain of the protein is located near the polypeptide exit tunnel on the outside of the subunit, while an extended beta-hairpin is found that lines the wall of the exit tunnel in the center of the 70S ribosome. In Campylobacter fetus subsp. fetus (strain 82-40), this protein is Large ribosomal subunit protein uL22.